The sequence spans 226 residues: Orotate phosphoribosyltransferase 1 (226 aa).

Residue Lys-30 coordinates 5-phospho-alpha-D-ribose 1-diphosphate. 38 to 39 (FF) is an orotate binding site. 5-phospho-alpha-D-ribose 1-diphosphate is bound by residues 76–77 (YK), Arg-106, Lys-107, Lys-110, His-112, and 132–140 (DDVMTAGTA). Positions 136 and 164 each coordinate orotate. 2 positions are modified to phosphoserine: Ser-213 and Ser-225.

The protein belongs to the purine/pyrimidine phosphoribosyltransferase family. PyrE subfamily. As to quaternary structure, homodimer.

It carries out the reaction orotidine 5'-phosphate + diphosphate = orotate + 5-phospho-alpha-D-ribose 1-diphosphate. The protein operates within pyrimidine metabolism; UMP biosynthesis via de novo pathway; UMP from orotate: step 1/2. In terms of biological role, catalyzes the transfer of a ribosyl phosphate group from 5-phosphoribose 1-diphosphate to orotate, leading to the formation of orotidine monophosphate (OMP). This Saccharomyces cerevisiae (strain ATCC 204508 / S288c) (Baker's yeast) protein is Orotate phosphoribosyltransferase 1 (URA5).